The chain runs to 780 residues: Cullin-5 (780 aa).

At Ser34 the chain carries Phosphoserine. Thr210 carries the post-translational modification Phosphothreonine. Residues 711 to 772 enclose the Cullin neddylation domain; the sequence is RILRTQEAII…HRYIRRDEAD (62 aa). Lys724 is covalently cross-linked (Glycyl lysine isopeptide (Lys-Gly) (interchain with G-Cter in NEDD8)).

Belongs to the cullin family. Component of multiple cullin-5-RING E3 ubiquitin-protein ligase complexes (ECS complexes, also named CRL5 complexes) formed of CUL5, Elongin BC (ELOB and ELOC), RNF7/RBX2 and a variable SOCS box domain-containing protein as substrate-specific recognition component. CUL5-containing ECS complexes specifically contain RNF7/RBX2, and not RBX1, as catalytic subunit. Component of the ECS(ASB2) complex with the substrate recognition component ASB2. Component of the ECS(ASB6) complex with the substrate recognition component ASB6. Component of the ECS(ASB7) complex with the substrate recognition component ASB7. Component of the ECS(ASB9) complex with the substrate recognition component ASB9. Component of the ECS(ASB11) complex with the substrate recognition component ASB11. Component of the ECS(ASB12) complex with the substrate recognition component ASB12. Component of the ECS(LRRC41) complex with the substrate recognition component LRRC41. Component of the ECS(SOCS1) complex with the substrate recognition component SOCS1. Component of the ECS(SOCS2) complex with the substrate recognition component SOCS2. Component of the ECS(WSB1) complex with the substrate recognition subunit WSB1. Component of the ECS(SOCS3) complex with the substrate recognition component SOCS3. Component of the ECS(SOCS7) complex with the substrate recognition component SOCS7. Component of the ECS(SPSB1) complex with the substrate recognition component SPSB1. Component of the ECS(SPSB3) complex with the substrate recognition component SPSB3. Component of the ECS(SPSB2) complex with the substrate recognition component SPSB2. Component of the ECS(SPSB4) complex with the substrate recognition component SPSB4. Component of the ECS(RAB40) complex with the substrate recognition subunit RAB40A, RAB40B or RAB40C. Component of the ECS(KLHDC1) complex with the substrate recognition component KLHDC1. Component of the ECS(PCMTD1) complex with the substrate recognition subunit PCMTD1. May also form complexes containing RBX1 and ELOA or VHL; additional evidence is however required to confirm this result in vivo. Interacts (when neddylated) with ARIH2; leading to activate the E3 ligase activity of ARIH2. Interacts with ERCC6; the interaction is induced by DNA damaging agents or inhibitors of RNA polymerase II elongation. Interacts with ELOA (via the BC-box). Interacts (unneddylated form) with DCUN1D1, DCUN1D2, DCUN1D3, DCUN1D4 and DCUN1D5; these interactions promote the cullin neddylation. In terms of processing, neddylated; which enhances the ubiquitination activity of ECS complexes and prevents binding of the inhibitor CAND1. Deneddylated via its interaction with the COP9 signalosome (CSN).

It localises to the nucleus. The protein operates within protein modification; protein ubiquitination. In terms of biological role, core component of multiple cullin-5-RING E3 ubiquitin-protein ligase complexes (ECS complexes, also named CRL5 complexes), which mediate the ubiquitination and subsequent proteasomal degradation of target proteins. Acts a scaffold protein that contributes to catalysis through positioning of the substrate and the ubiquitin-conjugating enzyme. The functional specificity of the E3 ubiquitin-protein ligase complex depends on the variable SOCS box-containing substrate recognition component. Acts as a key regulator of neuron positioning during cortex development: component of various SOCS-containing ECS complexes, such as the ECS(SOCS7) complex, that regulate reelin signaling by mediating ubiquitination and degradation of DAB1. ECS(SOCS1) seems to direct ubiquitination of JAK2. The ECS(SOCS2) complex mediates the ubiquitination and subsequent proteasomal degradation of phosphorylated EPOR and GHR. The ECS(SPSB3) complex catalyzes ubiquitination of nuclear CGAS. ECS(KLHDC1) complex is part of the DesCEND (destruction via C-end degrons) pathway and mediates ubiquitination and degradation of truncated SELENOS selenoprotein produced by failed UGA/Sec decoding, which ends with a glycine. The ECS(ASB9) complex mediates ubiquitination and degradation of CKB. As part of some ECS complex, promotes 'Lys-11'-linked ubiquitination and degradation of BTRC. As part of a multisubunit ECS complex, polyubiquitinates monoubiquitinated POLR2A. As part of the ECS(RAB40C) complex, mediates ANKRD28 ubiquitination and degradation, thereby regulating protein phosphatase 6 (PP6) complex activity and focal adhesion assembly during cell migration. As part of the ECS(RAB40A) complex, mediates RHOU 'Lys-48'-linked ubiquitination and degradation, thus inhibiting focal adhesion disassembly during cell migration. As part of the ECS(RAB40B) complex, mediates LIMA1/EPLIN and RAP2 ubiquitination, thereby regulating actin cytoskeleton dynamics and stress fiber formation during cell migration. May form a cell surface vasopressin receptor. In Mus musculus (Mouse), this protein is Cullin-5.